The chain runs to 89 residues: MSSRISVSLLLLAVVATMFFTANVVDATPRSQGNMMRYGNSLPAYAPHVLYRFYNSRQFAPINKRNNAEVVNHILKNFGALDRLGDVGK.

An N-terminal signal peptide occupies residues 1–27 (MSSRISVSLLLLAVVATMFFTANVVDA).

Probable ligand of isoforms a and b of the calcitonin receptor-like protein, pdfr-1, a G-protein coupled receptor. May not signal through isoform c of pdfr-1. Involved in locomotion; may play a role in circadian rhythms of locomotor activity. Modulator of egg-laying. The protein is Pigment dispersing factor homolog pdf-2 of Caenorhabditis elegans.